A 146-amino-acid polypeptide reads, in one-letter code: Large ribosomal subunit protein uL15 (146 aa).

The segment at 1–57 (MDLSNLKAAEGSVHSDNFRRGRGHGSGNGKTAGKGHKGQKARSGAPRPGFEGGQMPL) is disordered.

This sequence belongs to the universal ribosomal protein uL15 family. Part of the 50S ribosomal subunit.

Functionally, binds to the 23S rRNA. This Agathobacter rectalis (strain ATCC 33656 / DSM 3377 / JCM 17463 / KCTC 5835 / VPI 0990) (Eubacterium rectale) protein is Large ribosomal subunit protein uL15.